The following is a 157-amino-acid chain: Ribosomal RNA large subunit methyltransferase H (157 aa).

Residues Leu73, Gly105, and 124–129 (MSKMTF) each bind S-adenosyl-L-methionine.

The protein belongs to the RNA methyltransferase RlmH family. As to quaternary structure, homodimer.

It is found in the cytoplasm. It carries out the reaction pseudouridine(1915) in 23S rRNA + S-adenosyl-L-methionine = N(3)-methylpseudouridine(1915) in 23S rRNA + S-adenosyl-L-homocysteine + H(+). Functionally, specifically methylates the pseudouridine at position 1915 (m3Psi1915) in 23S rRNA. This Bacteroides thetaiotaomicron (strain ATCC 29148 / DSM 2079 / JCM 5827 / CCUG 10774 / NCTC 10582 / VPI-5482 / E50) protein is Ribosomal RNA large subunit methyltransferase H.